Here is a 521-residue protein sequence, read N- to C-terminus: Envelope glycoprotein C homolog (521 aa).

The N-terminal stretch at 1–21 (MGPLGRAWLIAAIFAWALLSA) is a signal peptide. The Virion surface portion of the chain corresponds to 22–475 (RRGLAEEAEA…DASPGLIGSP (454 aa)). The disordered stretch occupies residues 24 to 138 (GLAEEAEASP…PSKAPPKERK (115 aa)). Positions 41–54 (PTETESSAGTTGAT) are enriched in low complexity. The segment covering 66-76 (EDSTPGATTPV) has biased composition (polar residues). N-linked (GlcNAc...) asparagine; by host glycosylation occurs at N111. C142 and C159 form a disulfide bridge. The region spanning 155 to 227 (LYVHCGVADN…LGDNYIFPSP (73 aa)) is the Ig-like V-type domain. N-linked (GlcNAc...) asparagine; by host glycosylation is found at N164 and N208. 3 disulfide bridges follow: C290–C351, C390–C447, and C394–C421. Residues 386–451 (GEAVCEARCV…PVDYTCTATG (66 aa)) form the Ig-like C2-type domain. A helical membrane pass occupies residues 476–496 (VLVSVVAVACGLGAVGLLLVA). Residues 497–521 (ASCLRRKARVIQPGLTRARALGSAP) are Cytoplasmic-facing.

The protein belongs to the herpesviridae glycoprotein C family. In terms of assembly, interacts with host complement component C3; this interaction inhibits host immune response by disregulating complement cascade.

The protein resides in the virion membrane. Its function is as follows. Essential for the initial attachment to heparan sulfate moieties of the host cell surface proteoglycans. Plays also a role in host immune evasion by inhibiting the host complement cascade activation. The polypeptide is Envelope glycoprotein C homolog (gC) (Bovine herpesvirus 1.1 (strain Cooper) (BoHV-1)).